Reading from the N-terminus, the 602-residue chain is 4-hydroxy-3-methylbut-2-en-1-yl diphosphate synthase (flavodoxin) (602 aa).

C508, C511, C543, and E550 together coordinate [4Fe-4S] cluster.

The protein belongs to the IspG family. [4Fe-4S] cluster serves as cofactor.

It catalyses the reaction (2E)-4-hydroxy-3-methylbut-2-enyl diphosphate + oxidized [flavodoxin] + H2O + 2 H(+) = 2-C-methyl-D-erythritol 2,4-cyclic diphosphate + reduced [flavodoxin]. The protein operates within isoprenoid biosynthesis; isopentenyl diphosphate biosynthesis via DXP pathway; isopentenyl diphosphate from 1-deoxy-D-xylulose 5-phosphate: step 5/6. Functionally, converts 2C-methyl-D-erythritol 2,4-cyclodiphosphate (ME-2,4cPP) into 1-hydroxy-2-methyl-2-(E)-butenyl 4-diphosphate. The sequence is that of 4-hydroxy-3-methylbut-2-en-1-yl diphosphate synthase (flavodoxin) from Chlamydia trachomatis serovar L2 (strain ATCC VR-902B / DSM 19102 / 434/Bu).